The sequence spans 307 residues: MTSKLKRVAVAQLCSSADLTKNLKVVKELISEAIQKKADVVFLPEASDYLSQNPLHSRYLAQKSPKFIRQLQSSITDLVRDNSRNIDVSIGVHLPPSEQDLLEGNDRVRNVLLYIDHEGKILQEYQKLHLFDVDVPNGPILKESKSVQPGKAIPDIIESPLGKLGSAICYDIRFPEFSLKLRSMGAEILCFPSAFTIKTGEAHWELLGRARAVDTQCYVLMPGQVGMHDLSDPEWEKQSHMSALEKSSRRESWGHSMVIDPWGKIIAHADPSTVGPQLILADLDRELLQEIRNKMPLWNQRRDDLFH.

The CN hydrolase domain occupies 6 to 285 (KRVAVAQLCS…PQLILADLDR (280 aa)). Glu-45 functions as the Proton acceptor in the catalytic mechanism. Lys-127 acts as the Proton donor in catalysis. Cys-169 serves as the catalytic Nucleophile. Substrate is bound by residues Arg-173 and Thr-199.

This sequence belongs to the carbon-nitrogen hydrolase superfamily. NIT1/NIT2 family. Homodimer.

The protein resides in the cytoplasm. The protein localises to the mitochondrion. The catalysed reaction is N-(4-oxoglutaryl)-L-cysteinylglycine + H2O = L-cysteinylglycine + 2-oxoglutarate. It catalyses the reaction N-(4-carboxy-4-oxobutanoyl)-L-ethylglycylglycine + H2O = N-(2-aminobutanoyl)glycine + 2-oxoglutarate. Catalyzes the hydrolysis of the amide bond in N-(4-oxoglutarate)-L-cysteinylglycine (deaminated glutathione), a metabolite repair reaction to dispose of the harmful deaminated glutathione. Possesses amidase activity toward deaminated ophthalmate in vitro. This Saccharomyces cerevisiae (strain ATCC 204508 / S288c) (Baker's yeast) protein is Deaminated glutathione amidase (NIT2).